The primary structure comprises 240 residues: Uridylate kinase (240 aa).

13–16 is an ATP binding site; sequence KFSG. Residue Gly55 participates in UMP binding. The ATP site is built by Gly56 and Arg60. UMP contacts are provided by residues Asp76 and 137 to 144; that span reads TGNPFFTT. ATP-binding residues include Thr164, Tyr170, and Asp173.

This sequence belongs to the UMP kinase family. As to quaternary structure, homohexamer.

Its subcellular location is the cytoplasm. It catalyses the reaction UMP + ATP = UDP + ADP. Its pathway is pyrimidine metabolism; CTP biosynthesis via de novo pathway; UDP from UMP (UMPK route): step 1/1. Its activity is regulated as follows. Inhibited by UTP. Functionally, catalyzes the reversible phosphorylation of UMP to UDP. The sequence is that of Uridylate kinase from Helicobacter pylori (strain HPAG1).